We begin with the raw amino-acid sequence, 258 residues long: L-aminoadipate-semialdehyde dehydrogenase-phosphopantetheinyl transferase (258 aa).

It belongs to the P-Pant transferase superfamily. AcpS family.

The catalysed reaction is apo-[ACP] + CoA = holo-[ACP] + adenosine 3',5'-bisphosphate + H(+). In terms of biological role, catalyzes the transfer of a 4'-phosphopantetheine moiety from coenzyme A to a serine residue of acceptor proteins, such as alpha-aminoadipate reductase. Necessary for alpha-aminoadipate reductase activity. This Candida glabrata (strain ATCC 2001 / BCRC 20586 / JCM 3761 / NBRC 0622 / NRRL Y-65 / CBS 138) (Yeast) protein is L-aminoadipate-semialdehyde dehydrogenase-phosphopantetheinyl transferase (LYS5).